A 459-amino-acid polypeptide reads, in one-letter code: Ribulose bisphosphate carboxylase large chain (459 aa).

Lys-4 bears the N6,N6,N6-trimethyllysine mark. Substrate is bound by residues Asn-113 and Thr-163. The active-site Proton acceptor is the Lys-165. Position 167 (Lys-167) interacts with substrate. Lys-191, Asp-193, and Glu-194 together coordinate Mg(2+). Lys-191 bears the N6-carboxylysine mark. His-284 acts as the Proton acceptor in catalysis. Substrate contacts are provided by Arg-285, His-317, and Ser-369.

This sequence belongs to the RuBisCO large chain family. Type I subfamily. In terms of assembly, heterohexadecamer of 8 large chains and 8 small chains; disulfide-linked. The disulfide link is formed within the large subunit homodimers. Mg(2+) is required as a cofactor. The disulfide bond which can form in the large chain dimeric partners within the hexadecamer appears to be associated with oxidative stress and protein turnover.

Its subcellular location is the plastid. It is found in the chloroplast. It catalyses the reaction 2 (2R)-3-phosphoglycerate + 2 H(+) = D-ribulose 1,5-bisphosphate + CO2 + H2O. It carries out the reaction D-ribulose 1,5-bisphosphate + O2 = 2-phosphoglycolate + (2R)-3-phosphoglycerate + 2 H(+). Its function is as follows. RuBisCO catalyzes two reactions: the carboxylation of D-ribulose 1,5-bisphosphate, the primary event in carbon dioxide fixation, as well as the oxidative fragmentation of the pentose substrate in the photorespiration process. Both reactions occur simultaneously and in competition at the same active site. The sequence is that of Ribulose bisphosphate carboxylase large chain from Cephalotus follicularis (Albany pitcher plant).